The sequence spans 667 residues: Ribosomal oxygenase 1 (667 aa).

Met1 bears the N-acetylmethionine mark. Over residues Met1–Leu11 the composition is skewed to low complexity. The disordered stretch occupies residues Met1–Leu99. Composition is skewed to basic residues over residues Arg12–Gln22 and Arg35–Arg44. Phosphoserine occurs at positions 61, 64, and 108. The JmjC domain maps to Cys322 to Ala467. Fe cation contacts are provided by His368, Asp370, and His433.

Belongs to the ROX family. NO66 subfamily. In terms of assembly, interacts with SP7/OSX; the interaction is direct. Interacts with MYC. Interacts with PHF19; leading to its recruitment to H3K36me3 sites. Fe(2+) serves as cofactor.

The protein resides in the nucleus. It localises to the nucleolus. The protein localises to the nucleoplasm. It catalyses the reaction N(6),N(6)-dimethyl-L-lysyl(36)-[histone H3] + 2 2-oxoglutarate + 2 O2 = L-lysyl(36)-[histone H3] + 2 formaldehyde + 2 succinate + 2 CO2. It carries out the reaction N(6)-methyl-L-lysyl-[protein] + 2-oxoglutarate + O2 = L-lysyl-[protein] + formaldehyde + succinate + CO2. The enzyme catalyses L-histidyl-[protein] + 2-oxoglutarate + O2 = (3S)-3-hydroxy-L-histidyl-[protein] + succinate + CO2. Oxygenase that can act as both a histone lysine demethylase and a ribosomal histidine hydroxylase. Specifically demethylates 'Lys-4' (H3K4me) and 'Lys-36' (H3K36me) of histone H3, thereby playing a central role in histone code. Preferentially demethylates trimethylated H3 'Lys-4' (H3K4me3) and monomethylated H3 'Lys-4' (H3K4me1) residues, while it has weaker activity for dimethylated H3 'Lys-36' (H3K36me2). Acts as a regulator of osteoblast differentiation via its interaction with SP7/OSX by demethylating H3K4me and H3K36me, thereby inhibiting SP7/OSX-mediated promoter activation. Also catalyzes demethylation of non-histone proteins, such as CGAS: demethylation of monomethylated CGAS promotes interaction between CGAS and PARP1, followed by PARP1 inactivation. Also catalyzes the hydroxylation of 60S ribosomal protein L8 on 'His-216', thereby playing a role in ribosome biogenesis. Participates in MYC-induced transcriptional activation. The protein is Ribosomal oxygenase 1 (RIOX1) of Bos taurus (Bovine).